The chain runs to 366 residues: MSADFLALAVPGVQKLSPYVTGKPIDELARELGIEPARIVKLASNENPLGPNPRVLEAVRGELSELTRYPDGSGFRLKAKLAERFGLKSEQITLGNGSNDIIDLVARCCGAGPNAVFSAHAFAAYPLCTQAAGAESRVVPAVDYGHDLDGMLKAIDEQTAVIFIANPNNPTGNLVRAQALESFLDRVPERVLVVLDEAYIEFYRGTNCQRLNYLVRYPNLLVSRTLSKVYGLAGLRVGYSASSPQIADVLNRVRQPFNVNSLALVAACAGWMTSSIWLKGGGWIAPVWELEQGLAELRLKWIPSRGNFLAVDLGRDAAPINAGLLRDGVIVRPIAGYDCPTFLRVSIGTEQENARFLEALRVVLDQ.

Lysine 228 bears the N6-(pyridoxal phosphate)lysine mark.

The protein belongs to the class-II pyridoxal-phosphate-dependent aminotransferase family. Histidinol-phosphate aminotransferase subfamily. As to quaternary structure, homodimer. It depends on pyridoxal 5'-phosphate as a cofactor.

The enzyme catalyses L-histidinol phosphate + 2-oxoglutarate = 3-(imidazol-4-yl)-2-oxopropyl phosphate + L-glutamate. It functions in the pathway amino-acid biosynthesis; L-histidine biosynthesis; L-histidine from 5-phospho-alpha-D-ribose 1-diphosphate: step 7/9. The sequence is that of Histidinol-phosphate aminotransferase from Stutzerimonas stutzeri (Pseudomonas stutzeri).